A 474-amino-acid polypeptide reads, in one-letter code: Nucleobindin-1 (474 aa).

The first 24 residues, 1-24, serve as a signal peptide directing secretion; that stretch reads MPPSGPRAALFLLPSLLLLRAVLA. The residue at position 83 (S83) is a Phosphoserine. At T145 the chain carries Phosphothreonine. The stretch at 147 to 215 forms a coiled coil; sequence EARDLELLIQ…QQRRHREHPK (69 aa). The segment covering 190–207 has biased composition (basic and acidic residues); the sequence is SLGEEQRKEAERKLEEQQ. The segment at 190–218 is disordered; the sequence is SLGEEQRKEAERKLEEQQRRHREHPKVNV. The interval 225 to 318 is binds to GNAI2 and GNAI3; the sequence is LKEVWEELDG…VTLEEFLAST (94 aa). EF-hand domains are found at residues 237-272 and 289-324; these read PNRF…ELEK and ERLR…KEFG. Residues D250, N252, D254, E261, D302, N304, D306, and E313 each contribute to the Ca(2+) site. The short motif at 300–330 is the GBA element; sequence NVDTNQDRLVTLEEFLASTQRKEFGDTGEGW. Residues 355–422 adopt a coiled-coil conformation; the sequence is AYTEEELRRF…RKQQQQSHNN (68 aa). The tract at residues 382-474 is disordered; it reads LSQETEALGR…EPPQLDSQHL (93 aa). S383 is modified (phosphoserine). Residues 448–460 are compositionally biased toward basic and acidic residues; that stretch reads DQKDVDASEKKVP. Phosphoserine is present on S471.

It belongs to the nucleobindin family. As to quaternary structure, interacts (via GBA motif) with guanine nucleotide-binding protein G(i) alpha subunits GNAI1, GNAI2 and GNAI3 with higher affinity for GNAI1 and GNAI3 than for GNAI2. Preferentially interacts with inactive rather than active GNAI3. Interaction with GNAI3 is inhibited when NUCB1 binds calcium, probably due to a conformational change which renders the GBA motif inaccessible. Expressed in bone where it is detected in the soft tissue in the center of the osteon and in the osteocyte lacuna (at protein level).

Its subcellular location is the golgi apparatus. The protein localises to the cis-Golgi network membrane. It localises to the cytoplasm. The protein resides in the secreted. Major calcium-binding protein of the Golgi which may have a role in calcium homeostasis. Acts as a non-receptor guanine nucleotide exchange factor which binds to and activates alpha subunits of guanine nucleotide-binding proteins (G proteins). The chain is Nucleobindin-1 (NUCB1) from Bos taurus (Bovine).